A 396-amino-acid polypeptide reads, in one-letter code: 1-deoxy-D-xylulose 5-phosphate reductoisomerase (396 aa).

T14, G15, S16, I17, G40, and N128 together coordinate NADPH. 1-deoxy-D-xylulose 5-phosphate is bound at residue K129. E130 provides a ligand contact to NADPH. Position 154 (D154) interacts with Mn(2+). 1-deoxy-D-xylulose 5-phosphate contacts are provided by S155, E156, S180, and H203. E156 serves as a coordination point for Mn(2+). G209 contacts NADPH. 1-deoxy-D-xylulose 5-phosphate is bound by residues S216, N221, K222, and E225. Position 225 (E225) interacts with Mn(2+).

This sequence belongs to the DXR family. It depends on Mg(2+) as a cofactor. Requires Mn(2+) as cofactor.

The catalysed reaction is 2-C-methyl-D-erythritol 4-phosphate + NADP(+) = 1-deoxy-D-xylulose 5-phosphate + NADPH + H(+). It functions in the pathway isoprenoid biosynthesis; isopentenyl diphosphate biosynthesis via DXP pathway; isopentenyl diphosphate from 1-deoxy-D-xylulose 5-phosphate: step 1/6. Catalyzes the NADPH-dependent rearrangement and reduction of 1-deoxy-D-xylulose-5-phosphate (DXP) to 2-C-methyl-D-erythritol 4-phosphate (MEP). The chain is 1-deoxy-D-xylulose 5-phosphate reductoisomerase from Xylella fastidiosa (strain 9a5c).